The chain runs to 476 residues: Neuropeptide-like precursor 1 (476 aa).

Residues 1-34 (MNDAGASIGRHRGCLLLFVALAVAFSSYVEQVES) form the signal peptide. V133 is modified (valine amide). 2 propeptides span residues 160–232 (DEAT…NSYF) and 259–476 (YVMP…RKNQ). 2 disordered regions span residues 275-298 (QNDI…DGEV) and 360-385 (PEVE…SHPT). The segment covering 286–297 (DDDDDDDDDDGE) has biased composition (acidic residues).

Neuropeptide-like precursor 1-1: Expressed in antennal lobe (AL), corpora cardiaca (CC), corpora allata (CA) and gnathal ganglion (GNG) (at protein level). Expression in AL detected in all animals, in GNG in most animals, expression in CC and CA in few animals (at protein level). Neuropeptide-like precursor 1-2: Expressed in antennal lobe (AL), corpora cardiaca (CC), corpora allata (CA) and gnathal ganglion (GNG) (at protein level). Expression in AL detected in all animals, in GNG in some animals, expression in CC and CA in few animals (at protein level). Neuropeptide-like precursor 1-3: Not expressed in antennal lobe (AL), corpora cardiaca (CC), corpora allata (CA) and gnathal ganglion (GNG) (at protein level). Neuropeptide-like precursor 1-4: Expressed in antennal lobe (AL) and gnathal ganglion (GNG) (at protein level). Expression in AL detected in most animals, in GNG in some animals (at protein level). Not expressed in CC and CA (at protein level). YRVamide: Expressed in antennal lobe (AL), corpora cardiaca (CC), corpora allata (CA) and gnathal ganglion (GNG) (at protein level). Expression in AL and GNG detected in most animals, expression in CC and CA in few animals (at protein level). Extended YRVamide: Expressed in antennal lobe (AL) and gnathal ganglion (GNG) (at protein level). Expression in AL detected in most animals, in GNG in some animals (at protein level). Not expressed in corpora cardiaca (CC) and corpora allata (CA) (at protein level). Neuropeptide-like precursor 1-6: Expressed in antennal lobe (AL), corpora cardiaca (CC), corpora allata (CA) and gnathal ganglion (GNG) (at protein level). Expression in GNG detected in all animals, expression in AL in most animals, in CC and CA in few animals (at protein level). Neuropeptide-like precursor 1-6(1-11): Expressed in antennal lobe (AL) and gnathal ganglion (GNG) in most animals (at protein level). Not expressed in corpora cardiaca (CC) and corpora allata (CA) (at protein level). Neuropeptide-like precursor 1-9: Expressed in antennal lobe (AL) and gnathal ganglion (GNG) (at protein level). Expression in AL detected in all animals in GNG in most (at protein level). Not expressed in corpora cardiaca (CC) and corpora allata (CA) (at protein level).

Its subcellular location is the secreted. This chain is Neuropeptide-like precursor 1, found in Agrotis ipsilon (Black cutworm moth).